The sequence spans 714 residues: DNA ligase (714 aa).

Residues 59–63 (DYEYD), 108–109 (SL), and glutamate 139 each bind NAD(+). Residue lysine 141 is the N6-AMP-lysine intermediate of the active site. The NAD(+) site is built by arginine 162, glutamate 200, lysine 325, and lysine 349. Zn(2+) is bound by residues cysteine 443, cysteine 446, cysteine 461, and cysteine 466. The 90-residue stretch at 624–713 (VVENIFEGKT…IPDDLKDKVH (90 aa)) folds into the BRCT domain.

The protein belongs to the NAD-dependent DNA ligase family. LigA subfamily. The cofactor is Mg(2+). Mn(2+) is required as a cofactor.

The enzyme catalyses NAD(+) + (deoxyribonucleotide)n-3'-hydroxyl + 5'-phospho-(deoxyribonucleotide)m = (deoxyribonucleotide)n+m + AMP + beta-nicotinamide D-nucleotide.. DNA ligase that catalyzes the formation of phosphodiester linkages between 5'-phosphoryl and 3'-hydroxyl groups in double-stranded DNA using NAD as a coenzyme and as the energy source for the reaction. It is essential for DNA replication and repair of damaged DNA. This Persephonella marina (strain DSM 14350 / EX-H1) protein is DNA ligase.